The following is a 335-amino-acid chain: Cytoplasmic envelopment protein 2 (335 aa).

The protein belongs to the herpesviridae cytoplasmic envelopment protein 2 family. Interacts with cytoplasmic envelopment protein 3 and with the capsid.

It is found in the virion tegument. Its subcellular location is the host cytoplasm. It localises to the host nucleus. Functionally, plays a critical role in cytoplasmic virus egress. Participates in the final step of tegumentation and envelope acquisition within the host cytoplasm by directly interacting with the capsid. Upon virion binding to target cell, a signaling cascade is triggered to disrupt the interaction with the capsid, thereby preparing capsid uncoating. This Human herpesvirus 6A (strain Uganda-1102) (HHV-6 variant A) protein is Cytoplasmic envelopment protein 2 (U65).